The primary structure comprises 114 residues: NADH-ubiquinone oxidoreductase chain 3 (114 aa).

3 helical membrane-spanning segments follow: residues 3 to 23 (LITLIIMAMAMTTALYTINTY), 52 to 72 (IQFFLVAILFILFDLEIVLLL), and 86 to 106 (TILLITMLLTILTLGLLYEWL).

The protein belongs to the complex I subunit 3 family.

The protein resides in the mitochondrion membrane. It catalyses the reaction a ubiquinone + NADH + 5 H(+)(in) = a ubiquinol + NAD(+) + 4 H(+)(out). Its function is as follows. Core subunit of the mitochondrial membrane respiratory chain NADH dehydrogenase (Complex I) that is believed to belong to the minimal assembly required for catalysis. Complex I functions in the transfer of electrons from NADH to the respiratory chain. The immediate electron acceptor for the enzyme is believed to be ubiquinone. The protein is NADH-ubiquinone oxidoreductase chain 3 (MT-ND3) of Lycodon semicarinatus (Ryukyu odd-tooth snake).